Reading from the N-terminus, the 483-residue chain is Glutamyl-tRNA(Gln) amidotransferase subunit A (483 aa).

Residues lysine 75 and serine 150 each act as charge relay system in the active site. Serine 174 acts as the Acyl-ester intermediate in catalysis.

It belongs to the amidase family. GatA subfamily. As to quaternary structure, heterotrimer of A, B and C subunits.

It catalyses the reaction L-glutamyl-tRNA(Gln) + L-glutamine + ATP + H2O = L-glutaminyl-tRNA(Gln) + L-glutamate + ADP + phosphate + H(+). In terms of biological role, allows the formation of correctly charged Gln-tRNA(Gln) through the transamidation of misacylated Glu-tRNA(Gln) in organisms which lack glutaminyl-tRNA synthetase. The reaction takes place in the presence of glutamine and ATP through an activated gamma-phospho-Glu-tRNA(Gln). This chain is Glutamyl-tRNA(Gln) amidotransferase subunit A, found in Legionella pneumophila (strain Paris).